A 205-amino-acid polypeptide reads, in one-letter code: Small ribosomal subunit protein uS4 (205 aa).

The S4 RNA-binding domain occupies 94 to 157 (SRLDTVVYRM…QQIPLIQESI (64 aa)).

It belongs to the universal ribosomal protein uS4 family. As to quaternary structure, part of the 30S ribosomal subunit. Contacts protein S5. The interaction surface between S4 and S5 is involved in control of translational fidelity.

Its function is as follows. One of the primary rRNA binding proteins, it binds directly to 16S rRNA where it nucleates assembly of the body of the 30S subunit. In terms of biological role, with S5 and S12 plays an important role in translational accuracy. The protein is Small ribosomal subunit protein uS4 of Rickettsia typhi (strain ATCC VR-144 / Wilmington).